Consider the following 239-residue polypeptide: MTLLTPDQLEAQLRQIGAERYHNRHPFHRKLHDGKLDKAQVQAWALNRYYYQARIPAKDATLLARLPTAELRREWRRRIEDHDGTEPGTGGVARWLMLTDGLGLDRDYVESLDGLLPATRFSVDAYVNFVRDQSILAAIASSLTELFSPTIISERVSGMLRHYDFVSEKTLAYFTPRLTQAPRDSDFALAYVREKARTPEQQKEVLGALEFKCSVLWTMLDALDYAYVEGHIPPGAFVP.

Belongs to the PqqC family.

It carries out the reaction 6-(2-amino-2-carboxyethyl)-7,8-dioxo-1,2,3,4,7,8-hexahydroquinoline-2,4-dicarboxylate + 3 O2 = pyrroloquinoline quinone + 2 H2O2 + 2 H2O + H(+). Its pathway is cofactor biosynthesis; pyrroloquinoline quinone biosynthesis. Functionally, ring cyclization and eight-electron oxidation of 3a-(2-amino-2-carboxyethyl)-4,5-dioxo-4,5,6,7,8,9-hexahydroquinoline-7,9-dicarboxylic-acid to PQQ. This is Pyrroloquinoline-quinone synthase from Gluconobacter oxydans (strain 621H) (Gluconobacter suboxydans).